A 1032-amino-acid chain; its full sequence is GPI ethanolamine phosphate transferase 1 (1032 aa).

At 1 to 6 (MARLGR) the chain is on the cytoplasmic side. A helical membrane pass occupies residues 7-27 (FGFLALAVVFHLIYAYSIFDI). The Lumenal segment spans residues 28–468 (YFVSPIVSGM…LQTYDWLFLR (441 aa)). N-linked (GlcNAc...) asparagine glycans are attached at residues Asn150 and Asn435. Residues 469–489 (TIITFGYLGWIAYALTTVIDL) form a helical membrane-spanning segment. At 490–500 (HVLHRTSDSKR) the chain is on the cytoplasmic side. The helical transmembrane segment at 501 to 521 (TVGSTIFFTSILAALFSVLLY) threads the bilayer. Residues 522 to 523 (QK) are Lumenal-facing. A helical transmembrane segment spans residues 524–544 (SSWQYYVYGAFPIFFWEEVFA). Topologically, residues 545-564 (RRKALIAGREILLGHVRSFG) are cytoplasmic. The chain crosses the membrane as a helical span at residues 565–585 (GYIASGFQLVAFVAVLEALLM). Residues 586–596 (RHQVQSYFHRE) lie on the Lumenal side of the membrane. Residues 597-617 (IYTVCFVLGSFWPILYGVDFV) form a helical membrane-spanning segment. Over 618 to 622 (RQNTV) the chain is Cytoplasmic. A helical transmembrane segment spans residues 623 to 643 (LSATWAVGCSLMSTFTLLPVI). Over 644–647 (KVEN) the chain is Lumenal. The helical transmembrane segment at 648 to 668 (INTITYGALLMFFTGLFYLLF) threads the bilayer. The Cytoplasmic portion of the chain corresponds to 669 to 688 (EDTILKHSKSSGHAPGAISS). Residues 689–709 (LGSRVIMGMQVGMVLLALIVT) form a helical membrane-spanning segment. Residues 710–722 (RSSVSSLQAKQGL) are Lumenal-facing. Residues 723–743 (PFGNQVVGWFVLVASLVLPFF) traverse the membrane as a helical segment. Topologically, residues 744 to 766 (HRLYPNSHYLHRLMVLFLTFSPT) are cytoplasmic. A helical transmembrane segment spans residues 767–787 (FIILTISYEGLFYFVFCMTLV). The Lumenal portion of the chain corresponds to 788–841 (TWVRLEHAIYVYTARSSAHYGGNNTVPKKPGLNATAVIDGQEYRYRRLGLADTR). 2 N-linked (GlcNAc...) asparagine glycosylation sites follow: Asn810 and Asn820. Residues 842-862 (VALFFFFLLQSAFFSTGNIAS) traverse the membrane as a helical segment. At 863-884 (VSSFSLESVFRLIPVFSPFSQS) the chain is on the cytoplasmic side. A helical membrane pass occupies residues 885–905 (ALLILKLLIPFAIISANLGIL). Over 906–914 (NRRLEVAPS) the chain is Lumenal. A helical membrane pass occupies residues 915 to 935 (ALFMVVMSISDVMTLNFFYMV). Topologically, residues 936 to 951 (RDEGSWLDIGTTISHF) are cytoplasmic. The helical transmembrane segment at 952–972 (LIASFLCTFVAGLEFLSEVFI) threads the bilayer. Topologically, residues 973-1032 (SGVDFGPTTKAIGASITKTVGGTAGSDVVDSQSGPEDAANSKKAEGLEGSETIRQNGGSV) are lumenal. Positions 994–1032 (GTAGSDVVDSQSGPEDAANSKKAEGLEGSETIRQNGGSV) are disordered.

It belongs to the PIGG/PIGN/PIGO family. PIGN subfamily.

The protein localises to the endoplasmic reticulum membrane. It functions in the pathway glycolipid biosynthesis; glycosylphosphatidylinositol-anchor biosynthesis. Functionally, ethanolamine phosphate transferase involved in glycosylphosphatidylinositol-anchor biosynthesis. Transfers ethanolamine phosphate to the first alpha-1,4-linked mannose of the glycosylphosphatidylinositol precursor of GPI-anchor. The chain is GPI ethanolamine phosphate transferase 1 (mcd4) from Aspergillus fumigatus (strain ATCC MYA-4609 / CBS 101355 / FGSC A1100 / Af293) (Neosartorya fumigata).